The following is a 559-amino-acid chain: N-acetylglucosamine-6-sulfatase (559 aa).

Residues 1-26 (MRFLSLAPDRPRRGGPRHLPSGSPAP) form a disordered region. The signal sequence occupies residues 1 to 47 (MRFLSLAPDRPRRGGPRHLPSGSPAPPPPPPLLLLLLLGGCLGVSGA). Asp-62, Asp-63, and Cys-98 together coordinate Ca(2+). Residue Cys-98 is the Nucleophile of the active site. At Cys-98 the chain carries 3-oxoalanine (Cys). Asn-118, Asn-124, Asn-190, Asn-205, Asn-217, Asn-286, and Asn-324 each carry an N-linked (GlcNAc...) asparagine glycan. Ca(2+)-binding residues include Asp-333 and Asn-334. N-linked (GlcNAc...) asparagine glycosylation is found at Asn-369, Asn-394, Asn-412, Asn-429, Asn-456, and Asn-487. Phosphoserine is present on Ser-548.

It belongs to the sulfatase family. Ca(2+) is required as a cofactor. Processed by internal peptidase. Post-translationally, the conversion to 3-oxoalanine (also known as C-formylglycine, FGly), of a serine or cysteine residue in prokaryotes and of a cysteine residue in eukaryotes, is critical for catalytic activity.

It localises to the lysosome. The catalysed reaction is Hydrolysis of the 6-sulfate groups of the N-acetyl-D-glucosamine 6-sulfate units of heparan sulfate and keratan sulfate.. Hydrolyzes 6-sulfate groups in N-acetyl-d-glucosaminide units of heparin sulfate and keratan sulfate. The sequence is that of N-acetylglucosamine-6-sulfatase (GNS) from Capra hircus (Goat).